Reading from the N-terminus, the 666-residue chain is DNA ligase (666 aa).

Residues 34–38, 83–84, and E114 contribute to the NAD(+) site; these read DAEYD and SL. The N6-AMP-lysine intermediate role is filled by K116. NAD(+) is bound by residues R137, E171, K286, and K310. 4 residues coordinate Zn(2+): C404, C407, C422, and C427. The 79-residue stretch at 588-666 folds into the BRCT domain; the sequence is NTESTISEKS…EEFFAILKGE (79 aa).

It belongs to the NAD-dependent DNA ligase family. LigA subfamily. Mg(2+) serves as cofactor. The cofactor is Mn(2+).

It catalyses the reaction NAD(+) + (deoxyribonucleotide)n-3'-hydroxyl + 5'-phospho-(deoxyribonucleotide)m = (deoxyribonucleotide)n+m + AMP + beta-nicotinamide D-nucleotide.. In terms of biological role, DNA ligase that catalyzes the formation of phosphodiester linkages between 5'-phosphoryl and 3'-hydroxyl groups in double-stranded DNA using NAD as a coenzyme and as the energy source for the reaction. It is essential for DNA replication and repair of damaged DNA. In Mesoplasma florum (strain ATCC 33453 / NBRC 100688 / NCTC 11704 / L1) (Acholeplasma florum), this protein is DNA ligase.